Here is a 312-residue protein sequence, read N- to C-terminus: Probable rRNA-processing protein EBP2 (312 aa).

The tract at residues 1 to 32 (MLHHEDESSPESDSDFDASELTDKELQEAFSQ) is disordered. The segment covering 8–20 (SSPESDSDFDASE) has biased composition (acidic residues). The stretch at 140–176 (EMAKTDQHMQKIRHKLQLKQASMEKSEKAKQLRALRK) forms a coiled coil. Residues 211 to 312 (LDFLEGDQTP…VRQKMKSKRR (102 aa)) form a disordered region. Residues 282 to 312 (KGPHRPGKKGGKNANKRPGKNVRQKMKSKRR) show a composition bias toward basic residues.

This sequence belongs to the EBP2 family.

Its subcellular location is the nucleus. It is found in the nucleolus. Required for the processing of the 27S pre-rRNA. This Xenopus laevis (African clawed frog) protein is Probable rRNA-processing protein EBP2 (ebna1bp2).